A 340-amino-acid chain; its full sequence is N(4)-(Beta-N-acetylglucosaminyl)-L-asparaginase (340 aa).

Residues 1 to 45 (MRIIYKQQTMNNNRRDFIKKLGIATAAIAINPLEAKNLLDTSEPK) form the signal peptide. The Nucleophile role is filled by Thr197. Residues 225 to 228 (RVGD) and 248 to 251 (TGHG) contribute to the substrate site.

The protein belongs to the Ntn-hydrolase family. Heterotetramer of two alpha and two beta chains arranged as a dimer of alpha/beta heterodimers. In terms of processing, cleaved into an alpha and beta chain by autocatalysis; this activates the enzyme. The N-terminal residue of the beta subunit is responsible for the nucleophile hydrolase activity.

The protein resides in the periplasm. The enzyme catalyses N(4)-(beta-N-acetyl-D-glucosaminyl)-L-asparagine + H2O = N-acetyl-beta-D-glucosaminylamine + L-aspartate + H(+). Its function is as follows. Cleaves the GlcNAc-Asn bond which joins oligosaccharides to the peptide of asparagine-linked glycoproteins. Requires that the glycosylated asparagine moiety is not substituted on its N-(R1) and C- (R2) terminus. This Elizabethkingia miricola (Chryseobacterium miricola) protein is N(4)-(Beta-N-acetylglucosaminyl)-L-asparaginase.